The chain runs to 453 residues: Nuclear distribution protein nudF-2 (453 aa).

A LisH domain is found at 9–41 (QADELHRALIAYLTAANLPNTAAALREELNLSE). A coiled-coil region spans residues 62-88 (SVVRLQKKIMDLESRNHILQSELDNAT). The segment at 84–107 (LDNATPTSRQNKDPVAWLPRAPPR) is disordered. 7 WD repeats span residues 112 to 153 (SHRD…RTIK), 155 to 195 (HTKA…KNIR), 199 to 239 (GHDH…CVKT), 242 to 281 (GHAEWVRDVCPSLDGKYILSTSDDYTSRLWDVTITNPEPK), 286 to 345 (GHEH…IKTL), 347 to 386 (GHDNWVRGLVFHPGGKYLLSVSDDKTLRCWDLTQEGKCVK), and 391 to 449 (AHGH…LNVR).

It belongs to the WD repeat LIS1/nudF family. In terms of assembly, self-associates. Interacts with ro-11/nde1 and dynein.

The protein localises to the cytoplasm. Its subcellular location is the cytoskeleton. The protein resides in the spindle pole. Its function is as follows. Positively regulates the activity of the minus-end directed microtubule motor protein dynein. May enhance dynein-mediated microtubule sliding by targeting dynein to the microtubule plus end. Required for nuclear migration during vegetative growth as well as development. Required for retrograde early endosome (EE) transport from the hyphal tip. Required for localization of dynein to the mitotic spindle poles. Recruits additional proteins to the dynein complex at SPBs. In Neurospora crassa (strain ATCC 24698 / 74-OR23-1A / CBS 708.71 / DSM 1257 / FGSC 987), this protein is Nuclear distribution protein nudF-2 (nmp-1).